A 286-amino-acid polypeptide reads, in one-letter code: Peroxisomal membrane protein pex14 (286 aa).

Residues Thr-61–Trp-69 carry the SH3-binding motif. Residues Lys-122 to Gln-214 are a coiled coil. Residues Lys-218 to Asp-239 are disordered.

Belongs to the peroxin-14 family. In terms of assembly, interacts with PEX13 (via SH3 domain); forming the PEX13-PEX14 docking complex. Interacts with PEX5 (via WxxxF/Y motifs).

It is found in the peroxisome membrane. Functionally, component of the PEX13-PEX14 docking complex, a translocon channel that specifically mediates the import of peroxisomal cargo proteins bound to PEX5 receptor. The PEX13-PEX14 docking complex forms a large import pore which can be opened to a diameter of about 9 nm. Mechanistically, PEX5 receptor along with cargo proteins associates with the PEX14 subunit of the PEX13-PEX14 docking complex in the cytosol, leading to the insertion of the receptor into the organelle membrane with the concomitant translocation of the cargo into the peroxisome matrix. The sequence is that of Peroxisomal membrane protein pex14 (pex14) from Schizosaccharomyces pombe (strain 972 / ATCC 24843) (Fission yeast).